The sequence spans 648 residues: Transcriptional regulator ManR (648 aa).

PRD domains are found at residues 187-292 (KFLH…YPLQ) and 297-404 (LENA…MQGS). 4 positions are modified to phosphohistidine; by HPr: His222, His281, His334, and His393. The 92-residue stretch at 409-500 (KKAVIVCHMG…FIRQLGESHR (92 aa)) folds into the PTS EIIB type-2 domain. Position 415 is a phosphocysteine; by EIIA (Cys415). One can recognise a PTS EIIA type-2 domain in the interval 510-648 (NNTTPFLVFL…VMTFLSHLDY (139 aa)). At His570 the chain carries Phosphohistidine; by EIIB.

Belongs to the transcriptional antiterminator BglG family.

The enzyme catalyses D-mannose(out) + N(pros)-phospho-L-histidyl-[protein] = D-mannose 6-phosphate(in) + L-histidyl-[protein]. With respect to regulation, the regulatory activity of ManR is modulated by phosphorylation and dephosphorylation of the various ManR domains. It becomes activated via phosphoryl group transfer from PEP, EI and HPr on the two conserved histidine residues in the PRD 2 domain, whereas phosphorylation of the EIIA-like domain on His-570 by the PTS EIIB-Man domain of ManP inactivates ManR. In terms of biological role, positively regulates the expression of the mannose operon that consists of three genes, manP, manA, and yjdF, which are responsible for the transport and utilization of mannose. Also activates its own expression. The protein is Transcriptional regulator ManR (manR) of Bacillus subtilis (strain 168).